The following is an 80-amino-acid chain: Large ribosomal subunit protein uL24 (80 aa).

This sequence belongs to the universal ribosomal protein uL24 family. As to quaternary structure, part of the 50S ribosomal subunit.

One of two assembly initiator proteins, it binds directly to the 5'-end of the 23S rRNA, where it nucleates assembly of the 50S subunit. Functionally, one of the proteins that surrounds the polypeptide exit tunnel on the outside of the subunit. This chain is Large ribosomal subunit protein uL24, found in Chlorobium phaeobacteroides (strain BS1).